The chain runs to 662 residues: Polyunsaturated fatty acid lipoxygenase ALOX15 (662 aa).

Residues Gly2–Arg114 enclose the PLAT domain. A Lipoxygenase domain is found at Thr115–Ile662. Fe cation contacts are provided by His360, His365, His540, His544, and Ile662.

This sequence belongs to the lipoxygenase family. In terms of assembly, interacts with PEBP1; in response to IL13/interleukin-13, prevents the interaction of PEBP1 with RAF1 to activate the ERK signaling cascade. Fe cation is required as a cofactor.

The protein resides in the cytoplasm. The protein localises to the cytosol. Its subcellular location is the cell membrane. It localises to the lipid droplet. It carries out the reaction (5Z,8Z,11Z,14Z)-eicosatetraenoate + O2 = (12S)-hydroperoxy-(5Z,8Z,10E,14Z)-eicosatetraenoate. The enzyme catalyses (9Z,12Z)-octadecadienoate + O2 = (13S)-hydroperoxy-(9Z,11E)-octadecadienoate. The catalysed reaction is (5Z,8Z,11Z,14Z)-eicosatetraenoate + O2 = (15S)-hydroperoxy-(5Z,8Z,11Z,13E)-eicosatetraenoate. It catalyses the reaction (5Z,8Z,11Z,14Z)-eicosatetraenoate + 2 O2 = (14R,15S)-dihydroperoxy-(5Z,8Z,10E,12E)-eicosatetraenoate. It carries out the reaction (5Z,8Z,11Z,14Z)-eicosatetraenoate + 2 O2 = (8S,15S)-dihydroperoxy-(5Z,9E,11Z,13E)-eicosatetraenoate. The enzyme catalyses (14S,15R)-epoxy-(5Z,8Z,11Z)-eicosatrienoate + O2 = (8S)-hydroperoxy-(14S,15R)-epoxy-(5Z,9E,11Z)-eicosatrienoate. The catalysed reaction is (14S,15R)-epoxy-(5Z,8Z,11Z)-eicosatrienoate + O2 = (12S)-hydroperoxy-(14S,15R)-epoxy-(5Z,8Z,10E)-eicosatrienoate. It catalyses the reaction (14R,15S)-epoxy-(5Z,8Z,11Z)-eicosatrienoate + O2 = (5S)-hydroperoxy-(14R,15S)-epoxy-(6E,8Z,11Z)-eicosatrienoate. It carries out the reaction (14R,15S)-epoxy-(5Z,8Z,11Z)-eicosatrienoate + O2 = (12S)-hydroperoxy-(14R,15S)-epoxy-(5Z,8Z,10E)-eicosatrienoate. The enzyme catalyses (15R)-hydroperoxy-(5Z,8Z,11Z,13E)-eicosatetraenoate = 15-oxo-(5Z,8Z,11Z,13E)-eicosatetraenoate + H2O. The catalysed reaction is (15S)-hydroperoxy-(5Z,8Z,11Z,13E)-eicosatetraenoate = (14S,15S)-epoxy-(5Z,8Z,10E,12E)-eicosatetraenoate + H2O. It catalyses the reaction (12S)-hydroperoxy-(5Z,8Z,10E,14Z)-eicosatetraenoate = (8S)-hydroxy-(11S,12S)-epoxy-(5Z,9E,14Z)-eicosatrienoate. It carries out the reaction (4Z,7Z,10Z,13Z,16Z)-docosapentaenoate + O2 = 14-hydroperoxy-(4Z,7Z,10Z,12E,16Z)-docosapentaenoate. The enzyme catalyses (7Z,10Z,13Z,16Z,19Z)-docosapentaenoate + O2 = 14-hydroperoxy-(7Z,10Z,12E,16Z,19Z)-docosapentaenoate. The catalysed reaction is (4Z,7Z,10Z,13Z,16Z,19Z)-docosahexaenoate + O2 = (14S)-hydroperoxy-(4Z,7Z,10Z,12E,16Z,19Z)-docosahexaenoate. It catalyses the reaction (4Z,7Z,10Z,13Z,16Z,19Z)-docosahexaenoate + O2 = (17S)-hydroperoxy-(4Z,7Z,10Z,13Z,15E,19Z)-docosahexaenoate. It carries out the reaction (7S)-hydroperoxy-(4Z,8E,10Z,13Z,16Z,19Z)-docosahexaenoate + O2 = (7S,14S)-dihydroperoxy-(4Z,8E,10Z,12E,16Z,19Z)-docosahexaenoate. The enzyme catalyses (7S)-hydroperoxy-(4Z,8E,10Z,13Z,16Z,19Z)-docosahexaenoate + O2 = (7S,17S)-dihydroperoxy-(4Z,8E,10Z,13Z,15E,19Z)-docosahexaenoate. The catalysed reaction is (4Z,7Z,10Z,13Z,16Z,19Z)-docosahexaenoate + O2 = (11S)-hydroperoxy-(4Z,7Z,9E,13Z,16Z,19Z)-docosahexaenoate. It catalyses the reaction N-(5Z,8Z,11Z,14Z)-eicosatetraenoyl-taurine + O2 = N-(12S)-hydroperoxy-(5Z,8Z,10E,14Z)-eicosatetraenoyl-taurine. It carries out the reaction N-(5Z,8Z,11Z,14Z)-eicosatetraenoyl-gamma-aminobutanoate + O2 = N-(12S)-hydroperoxy-(5Z,8Z,10E,14Z)-eicosatetraenoyl-gamma-aminobutanoate. The enzyme catalyses N-(5Z,8Z,11Z,14Z)-eicosatetraenoyl-glycine + O2 = N-(12S)-hydroperoxy-(5Z,8Z,10E,14Z)-eicosatetraenoyl-glycine. The catalysed reaction is N-(5Z,8Z,11Z,14Z)-eicosatetraenoyl-L-alanine + O2 = N-(12S)-hydroperoxy-(5Z,8Z,10E,14Z)-eicosatetraenoyl-alanine. It catalyses the reaction N-(5Z,8Z,11Z,14Z)-eicosatetraenoyl-taurine + O2 = N-(15S)-hydroperoxy-(5Z,8Z,11Z,13E)-eicosatetraenoyl-taurine. It carries out the reaction N-(5Z,8Z,11Z,14Z)-eicosatetraenoyl-gamma-aminobutanoate + O2 = N-(15S)-hydroperoxy-(5Z,8Z,11Z,13E)-eicosatetraenoyl-gamma-aminobutanoate. The enzyme catalyses N-(5Z,8Z,11Z,14Z)-eicosatetraenoyl-glycine + O2 = N-(15S)-hydroperoxy-(5Z,8Z,11Z,13E)-eicosatetraenoyl-glycine. The catalysed reaction is N-(5Z,8Z,11Z,14Z)-eicosatetraenoyl-L-alanine + O2 = N-(15S)-hydroperoxy-(5Z,8Z,11Z,13E)-eicosatetraenoyl-alanine. It functions in the pathway lipid metabolism; hydroperoxy eicosatetraenoic acid biosynthesis. Functionally, non-heme iron-containing dioxygenase that catalyzes the stereo-specific peroxidation of free and esterified polyunsaturated fatty acids generating a spectrum of bioactive lipid mediators. It inserts peroxyl groups at C12 or C15 of arachidonate ((5Z,8Z,11Z,14Z)-eicosatetraenoate) producing both 12-hydroperoxyeicosatetraenoate/12-HPETE and 15-hydroperoxyeicosatetraenoate/15-HPETE. It may then act on 12-HPETE to produce hepoxilins, which may show pro-inflammatory properties. Can also peroxidize linoleate ((9Z,12Z)-octadecadienoate) to 13-hydroperoxyoctadecadienoate. May participate in the sequential oxidations of DHA ((4Z,7Z,10Z,13Z,16Z,19Z)-docosahexaenoate) to generate specialized pro-resolving mediators (SPMs)like resolvin D5 ((7S,17S)-diHPDHA) and (7S,14S)-diHPDHA, that actively down-regulate the immune response and have anti-aggregation properties with platelets. Can convert epoxy fatty acids to hydroperoxy-epoxides derivatives followed by an intramolecular nucleophilic substitution leading to the formation of monocyclic endoperoxides. Plays an important role during the maintenance of self-tolerance by peroxidizing membrane-bound phosphatidylethanolamine which can then signal the sorting process for clearance of apoptotic cells during inflammation and prevent an autoimmune response. In addition to its role in the immune and inflammatory responses, this enzyme may play a role in epithelial wound healing in the cornea through production of lipoxin A4 (LXA(4)) and docosahexaenoic acid-derived neuroprotectin D1 (NPD1; 10R,17S-HDHA), both lipid autacoids exhibit anti-inflammatory and neuroprotective properties. Furthermore, it may regulate actin polymerization which is crucial for several biological processes such as the phagocytosis of apoptotic cells. It is also implicated in the generation of endogenous ligands for peroxisome proliferator activated receptor (PPAR-gamma), hence modulating macrophage development and function. It may also exert a negative effect on skeletal development by regulating bone mass through this pathway. As well as participates in ER stress and downstream inflammation in adipocytes, pancreatic islets, and liver. Finally, it is also involved in the cellular response to IL13/interleukin-13. This is Polyunsaturated fatty acid lipoxygenase ALOX15 from Pongo abelii (Sumatran orangutan).